Consider the following 369-residue polypeptide: Probable dual-specificity RNA methyltransferase RlmN (369 aa).

Residue Glu108 is the Proton acceptor of the active site. The 238-residue stretch at 114-351 folds into the Radical SAM core domain; that stretch reads YPDRATLCIS…LAQGVSCTVR (238 aa). The cysteines at positions 121 and 362 are disulfide-linked. [4Fe-4S] cluster contacts are provided by Cys128, Cys132, and Cys135. Residues 183 to 184, Ser217, 240 to 242, and Asn319 contribute to the S-adenosyl-L-methionine site; these read GE and SLH. Cys362 (S-methylcysteine intermediate) is an active-site residue.

This sequence belongs to the radical SAM superfamily. RlmN family. The cofactor is [4Fe-4S] cluster.

It localises to the cytoplasm. It catalyses the reaction adenosine(2503) in 23S rRNA + 2 reduced [2Fe-2S]-[ferredoxin] + 2 S-adenosyl-L-methionine = 2-methyladenosine(2503) in 23S rRNA + 5'-deoxyadenosine + L-methionine + 2 oxidized [2Fe-2S]-[ferredoxin] + S-adenosyl-L-homocysteine. It carries out the reaction adenosine(37) in tRNA + 2 reduced [2Fe-2S]-[ferredoxin] + 2 S-adenosyl-L-methionine = 2-methyladenosine(37) in tRNA + 5'-deoxyadenosine + L-methionine + 2 oxidized [2Fe-2S]-[ferredoxin] + S-adenosyl-L-homocysteine. Its function is as follows. Specifically methylates position 2 of adenine 2503 in 23S rRNA and position 2 of adenine 37 in tRNAs. The protein is Probable dual-specificity RNA methyltransferase RlmN of Rhodococcus jostii (strain RHA1).